The primary structure comprises 257 residues: Dof zinc finger protein DOF5.3 (257 aa).

Positions 23-50 (LSYSSNPTPLDNDQKKPSPATAVTRPQP) are disordered. The segment covering 24 to 33 (SYSSNPTPLD) has biased composition (polar residues). The Dof-type zinc finger occupies 55–109 (LRCPRCDSTNTKFCYYNNYSLTQPRYFCKSCRRYWTKGGTLRNIPVGGGCRKNKR). Zn(2+)-binding residues include C57, C60, C82, and C85. The tract at residues 104–127 (CRKNKRSTSSAARSLRTTPEPASH) is disordered. The span at 110 to 121 (STSSAARSLRTT) shows a compositional bias: low complexity.

In terms of tissue distribution, the PEAR proteins (e.g. DOF2.4, DOF5.1, DOF3.2, DOF1.1, DOF5.6 and DOF5.3) form a short-range concentration gradient that peaks at protophloem sieve elements (PSE). Accumulates in the stele.

The protein resides in the nucleus. In terms of biological role, transcription factor that binds specifically to a 5'-AA[AG]G-3' consensus core sequence. The PEAR proteins (e.g. DOF2.4, DOF5.1, DOF3.2, DOF1.1, DOF5.6 and DOF5.3) activate gene expression that promotes radial growth of protophloem sieve elements. This is Dof zinc finger protein DOF5.3 from Arabidopsis thaliana (Mouse-ear cress).